The following is a 180-amino-acid chain: Ribulose bisphosphate carboxylase small subunit, chloroplastic 3 (180 aa).

The N-terminal 56 residues, 1 to 56 (MASSLMSNAITAVVGASGAQANMVAPFNGLKSIASFPVTRKSNDITSIASNGGRVQ), are a transit peptide targeting the chloroplast.

Belongs to the RuBisCO small chain family. In terms of assembly, heterohexadecamer of 8 large and 8 small subunits.

It localises to the plastid. The protein localises to the chloroplast. Its function is as follows. RuBisCO catalyzes two reactions: the carboxylation of D-ribulose 1,5-bisphosphate, the primary event in carbon dioxide fixation, as well as the oxidative fragmentation of the pentose substrate. Both reactions occur simultaneously and in competition at the same active site. Although the small subunit is not catalytic it is essential for maximal activity. The protein is Ribulose bisphosphate carboxylase small subunit, chloroplastic 3 of Amaranthus hypochondriacus (Prince-of-Wales feather).